We begin with the raw amino-acid sequence, 233 residues long: Choline-phosphate cytidylyltransferase (233 aa).

Residues Leu-6, Ala-8, Gly-9, Tyr-80, Ser-85, and Ala-101 each coordinate CDP-choline. Residue Asp-102 coordinates Mg(2+). Tyr-187 lines the CDP-choline pocket. Residues Glu-213 and Asp-215 each contribute to the Mg(2+) site.

The protein belongs to the LicC/PntC cytidylyltransferase family. Mg(2+) serves as cofactor.

The catalysed reaction is phosphocholine + CTP + H(+) = CDP-choline + diphosphate. Its pathway is lipopolysaccharide biosynthesis. Functionally, cytidylyltransferase involved in the biosynthesis of lipopolysaccharides (LPS), a necessary component and antigenic determinant of the outer membrane that has been shown to be an important factor in the host-parasite interaction in a number of Gram-negative species. Catalyzes the activation of phosphocholine (P-Cho) to CDP-choline (CDP-Cho). LicC is critical for the expression of the 6A2-specific epitope. This chain is Choline-phosphate cytidylyltransferase, found in Haemophilus influenzae (strain ATCC 51907 / DSM 11121 / KW20 / Rd).